Consider the following 525-residue polypeptide: GMP synthase [glutamine-hydrolyzing] (525 aa).

Residues 8 to 207 (KILILDFGSQ…ALDICGCKAN (200 aa)) form the Glutamine amidotransferase type-1 domain. Residue C85 is the Nucleophile of the active site. Active-site residues include H181 and E183. Positions 208 to 400 (WKPSSIIEDA…LGLPYNMLYR (193 aa)) constitute a GMPS ATP-PPase domain. 235–241 (SGGVDSS) provides a ligand contact to ATP.

As to quaternary structure, homodimer.

It catalyses the reaction XMP + L-glutamine + ATP + H2O = GMP + L-glutamate + AMP + diphosphate + 2 H(+). Its pathway is purine metabolism; GMP biosynthesis; GMP from XMP (L-Gln route): step 1/1. Catalyzes the synthesis of GMP from XMP. This chain is GMP synthase [glutamine-hydrolyzing], found in Shewanella frigidimarina (strain NCIMB 400).